The following is a 294-amino-acid chain: Phosphatidylserine decarboxylase proenzyme (294 aa).

Residues aspartate 100, histidine 157, and serine 261 each act as charge relay system; for autoendoproteolytic cleavage activity in the active site. Serine 261 serves as the catalytic Schiff-base intermediate with substrate; via pyruvic acid; for decarboxylase activity. Serine 261 is modified (pyruvic acid (Ser); by autocatalysis).

Belongs to the phosphatidylserine decarboxylase family. PSD-B subfamily. Prokaryotic type I sub-subfamily. As to quaternary structure, heterodimer of a large membrane-associated beta subunit and a small pyruvoyl-containing alpha subunit. The cofactor is pyruvate. Post-translationally, is synthesized initially as an inactive proenzyme. Formation of the active enzyme involves a self-maturation process in which the active site pyruvoyl group is generated from an internal serine residue via an autocatalytic post-translational modification. Two non-identical subunits are generated from the proenzyme in this reaction, and the pyruvate is formed at the N-terminus of the alpha chain, which is derived from the carboxyl end of the proenzyme. The autoendoproteolytic cleavage occurs by a canonical serine protease mechanism, in which the side chain hydroxyl group of the serine supplies its oxygen atom to form the C-terminus of the beta chain, while the remainder of the serine residue undergoes an oxidative deamination to produce ammonia and the pyruvoyl prosthetic group on the alpha chain. During this reaction, the Ser that is part of the protease active site of the proenzyme becomes the pyruvoyl prosthetic group, which constitutes an essential element of the active site of the mature decarboxylase.

The protein resides in the cell membrane. The catalysed reaction is a 1,2-diacyl-sn-glycero-3-phospho-L-serine + H(+) = a 1,2-diacyl-sn-glycero-3-phosphoethanolamine + CO2. Its pathway is phospholipid metabolism; phosphatidylethanolamine biosynthesis; phosphatidylethanolamine from CDP-diacylglycerol: step 2/2. Catalyzes the formation of phosphatidylethanolamine (PtdEtn) from phosphatidylserine (PtdSer). This Histophilus somni (strain 129Pt) (Haemophilus somnus) protein is Phosphatidylserine decarboxylase proenzyme.